We begin with the raw amino-acid sequence, 161 residues long: Putative pre-16S rRNA nuclease (161 aa).

This sequence belongs to the YqgF nuclease family.

Its subcellular location is the cytoplasm. Could be a nuclease involved in processing of the 5'-end of pre-16S rRNA. This is Putative pre-16S rRNA nuclease from Methylocella silvestris (strain DSM 15510 / CIP 108128 / LMG 27833 / NCIMB 13906 / BL2).